The following is a 492-amino-acid chain: 3-octaprenyl-4-hydroxybenzoate carboxy-lyase (492 aa).

N177 serves as a coordination point for Mn(2+). Prenylated FMN contacts are provided by residues I180–R182, R194–L196, and R199–G200. E243 contributes to the Mn(2+) binding site. Residue D292 is the Proton donor of the active site.

This sequence belongs to the UbiD family. In terms of assembly, homohexamer. Prenylated FMN serves as cofactor. Requires Mn(2+) as cofactor.

It localises to the cell membrane. It carries out the reaction a 4-hydroxy-3-(all-trans-polyprenyl)benzoate + H(+) = a 2-(all-trans-polyprenyl)phenol + CO2. The protein operates within cofactor biosynthesis; ubiquinone biosynthesis. Its function is as follows. Catalyzes the decarboxylation of 3-octaprenyl-4-hydroxy benzoate to 2-octaprenylphenol, an intermediate step in ubiquinone biosynthesis. The polypeptide is 3-octaprenyl-4-hydroxybenzoate carboxy-lyase (Neisseria meningitidis serogroup A / serotype 4A (strain DSM 15465 / Z2491)).